A 388-amino-acid polypeptide reads, in one-letter code: Pepsin F (388 aa).

Positions 1–15 are cleaved as a signal peptide; that stretch reads MKWLGLLGLVALSEC. Residues 16 to 58 constitute a propeptide, activation peptide; sequence LVTIPLMKVKSMRENLRENDILLDYLEKHPYRPTYKLLSGQQD. Residues 74 to 385 form the Peptidase A1 domain; the sequence is YIGIISIGTP…DRANNRIGLA (312 aa). Asp-92 is a catalytic residue. Cystine bridges form between Cys-105–Cys-110 and Cys-266–Cys-270. Residue Asp-275 is part of the active site. Cys-309 and Cys-343 are joined by a disulfide.

The protein belongs to the peptidase A1 family.

The protein resides in the secreted. It carries out the reaction Preferential cleavage: hydrophobic, preferably aromatic, residues in P1 and P1' positions. Cleaves 1-Phe-|-Val-2, 4-Gln-|-His-5, 13-Glu-|-Ala-14, 14-Ala-|-Leu-15, 15-Leu-|-Tyr-16, 16-Tyr-|-Leu-17, 23-Gly-|-Phe-24, 24-Phe-|-Phe-25 and 25-Phe-|-Tyr-26 bonds in the B chain of insulin.. Its function is as follows. Shows particularly broad specificity; although bonds involving phenylalanine and leucine are preferred, many others are also cleaved to some extent. In Oryctolagus cuniculus (Rabbit), this protein is Pepsin F.